Reading from the N-terminus, the 305-residue chain is DNA-directed RNA polymerase 35 kDa subunit (305 aa).

Belongs to the poxviridae DNA-directed RNA polymerase 35 kDa subunit family. In terms of assembly, the DNA-dependent RNA polymerase used for intermediate and late genes expression consists of eight subunits 147 kDa, 133 kDa, 35 kDa, 30 kDa, 22 kDa, 19 kDa, 18 kDa and 7 kDa totalling more than 500 kDa in mass. The same holoenzyme, with the addition of the transcription-specificity factor RAP94, is used for early gene expression.

Its subcellular location is the virion. The enzyme catalyses RNA(n) + a ribonucleoside 5'-triphosphate = RNA(n+1) + diphosphate. Part of the DNA-dependent RNA polymerase which catalyzes the transcription of viral DNA into RNA using the four ribonucleoside triphosphates as substrates. Responsible for the transcription of early, intermediate and late genes. DNA-dependent RNA polymerase associates with the early transcription factor (ETF), itself composed of D6 and A7, thereby allowing the early genes transcription. Late transcription, and probably also intermediate transcription, require newly synthesized RNA polymerase. The sequence is that of DNA-directed RNA polymerase 35 kDa subunit (OPG156) from Bos taurus (Bovine).